Here is a 312-residue protein sequence, read N- to C-terminus: tRNA dimethylallyltransferase (312 aa).

Position 11–18 (11–18) interacts with ATP; that stretch reads GLTATGKT. A substrate-binding site is contributed by 13–18; the sequence is TATGKT. Positions 36 to 39 are interaction with substrate tRNA; that stretch reads DSMC.

The protein belongs to the IPP transferase family. In terms of assembly, monomer. The cofactor is Mg(2+).

The catalysed reaction is adenosine(37) in tRNA + dimethylallyl diphosphate = N(6)-dimethylallyladenosine(37) in tRNA + diphosphate. Its function is as follows. Catalyzes the transfer of a dimethylallyl group onto the adenine at position 37 in tRNAs that read codons beginning with uridine, leading to the formation of N6-(dimethylallyl)adenosine (i(6)A). The chain is tRNA dimethylallyltransferase from Caldicellulosiruptor saccharolyticus (strain ATCC 43494 / DSM 8903 / Tp8T 6331).